Reading from the N-terminus, the 316-residue chain is Olfactory receptor 52A5 (316 aa).

The Extracellular segment spans residues 1–27; the sequence is MPTFNGSVFMPSAFILIGIPGLESVQC. An N-linked (GlcNAc...) asparagine glycan is attached at asparagine 5. A helical transmembrane segment spans residues 28–48; that stretch reads WIGIPFSAMYLIGVIGNSLIL. The Cytoplasmic segment spans residues 49 to 56; it reads VIIKYENS. The helical transmembrane segment at 57–77 threads the bilayer; it reads LHIPMYIFLAMLAATDIALNT. Residues 78–101 lie on the Extracellular side of the membrane; that stretch reads CILPKMLGIFWFHLPEISFDACLF. The helical transmembrane segment at 102-122 threads the bilayer; it reads QMWLIHSFQAIESGILLAMAL. Residues 123-141 lie on the Cytoplasmic side of the membrane; sequence DRYVAICIPLRHATIFSQQ. The helical transmembrane segment at 142 to 162 threads the bilayer; that stretch reads FLTHIGLGVTLRAAILIIPSL. Over 163-199 the chain is Extracellular; that stretch reads GLIKCCLKHYRTTVISHSYCEHMAIVKLATEDIRVNK. A helical membrane pass occupies residues 200-220; sequence IYGLFVAFAILGFDIIFITLS. At 221–240 the chain is on the cytoplasmic side; the sequence is YVQIFITVFQLPQKEARFKA. The helical transmembrane segment at 241-261 threads the bilayer; that stretch reads FNTCIAHICVFLQFYLLAFFS. At 262–276 the chain is on the extracellular side; that stretch reads FFTHRFGSHIPPYIH. Residues 277–297 traverse the membrane as a helical segment; sequence ILLSNLYLLVPPFLNPIVYGV. Over 298–316 the chain is Cytoplasmic; that stretch reads KTKQIRDHIVKVFFFKKVT.

This sequence belongs to the G-protein coupled receptor 1 family.

The protein resides in the cell membrane. Functionally, odorant receptor. This chain is Olfactory receptor 52A5 (OR52A5), found in Homo sapiens (Human).